A 201-amino-acid chain; its full sequence is Small ribosomal subunit protein uS4 (201 aa).

The segment at 26-46 (LARRAYAPGDHGRDRRGKLSE) is disordered. Residues 35-44 (DHGRDRRGKL) are compositionally biased toward basic and acidic residues. The 64-residue stretch at 93-156 (RRLDNMVYRL…KNLDIIKNAV (64 aa)) folds into the S4 RNA-binding domain.

It belongs to the universal ribosomal protein uS4 family. Part of the 30S ribosomal subunit. Contacts protein S5. The interaction surface between S4 and S5 is involved in control of translational fidelity.

One of the primary rRNA binding proteins, it binds directly to 16S rRNA where it nucleates assembly of the body of the 30S subunit. In terms of biological role, with S5 and S12 plays an important role in translational accuracy. This is Small ribosomal subunit protein uS4 from Limosilactobacillus reuteri (strain DSM 20016) (Lactobacillus reuteri).